Reading from the N-terminus, the 366-residue chain is Ribosomal RNA large subunit methyltransferase M (366 aa).

S-adenosyl-L-methionine contacts are provided by residues Ser-188, 221 to 224 (CPGG), Asp-240, Asp-260, and Asp-277. The active-site Proton acceptor is Lys-306.

The protein belongs to the class I-like SAM-binding methyltransferase superfamily. RNA methyltransferase RlmE family. RlmM subfamily. As to quaternary structure, monomer.

It localises to the cytoplasm. The enzyme catalyses cytidine(2498) in 23S rRNA + S-adenosyl-L-methionine = 2'-O-methylcytidine(2498) in 23S rRNA + S-adenosyl-L-homocysteine + H(+). Catalyzes the 2'-O-methylation at nucleotide C2498 in 23S rRNA. This is Ribosomal RNA large subunit methyltransferase M from Escherichia coli O45:K1 (strain S88 / ExPEC).